Consider the following 207-residue polypeptide: Ribosome maturation factor RimM (207 aa).

Residues aspartate 114–tyrosine 207 form the PRC barrel domain.

This sequence belongs to the RimM family. Binds ribosomal protein uS19.

The protein localises to the cytoplasm. An accessory protein needed during the final step in the assembly of 30S ribosomal subunit, possibly for assembly of the head region. Essential for efficient processing of 16S rRNA. May be needed both before and after RbfA during the maturation of 16S rRNA. It has affinity for free ribosomal 30S subunits but not for 70S ribosomes. The sequence is that of Ribosome maturation factor RimM from Bordetella pertussis (strain Tohama I / ATCC BAA-589 / NCTC 13251).